The chain runs to 514 residues: 2-isopropylmalate synthase (514 aa).

A Pyruvate carboxyltransferase domain is found at 5–267; sequence VIIFDTTLRD…ETNIKHEEIH (263 aa). D14, H202, H204, and N238 together coordinate Mn(2+). The tract at residues 392 to 514 is regulatory domain; it reads KLNYLSVQSG…AEIKERIATV (123 aa).

It belongs to the alpha-IPM synthase/homocitrate synthase family. LeuA type 1 subfamily. Homodimer. Mn(2+) is required as a cofactor.

Its subcellular location is the cytoplasm. It catalyses the reaction 3-methyl-2-oxobutanoate + acetyl-CoA + H2O = (2S)-2-isopropylmalate + CoA + H(+). Its pathway is amino-acid biosynthesis; L-leucine biosynthesis; L-leucine from 3-methyl-2-oxobutanoate: step 1/4. Functionally, catalyzes the condensation of the acetyl group of acetyl-CoA with 3-methyl-2-oxobutanoate (2-ketoisovalerate) to form 3-carboxy-3-hydroxy-4-methylpentanoate (2-isopropylmalate). This is 2-isopropylmalate synthase from Photobacterium profundum (strain SS9).